Here is a 443-residue protein sequence, read N- to C-terminus: CBL-interacting protein kinase 29 (443 aa).

The 261-residue stretch at Tyr-32–Phe-292 folds into the Protein kinase domain. Residues Leu-38–Val-46 and Lys-61 each bind ATP. Asp-164 acts as the Proton acceptor in catalysis. The interval Asp-182–Glu-207 is activation loop. An NAF domain is found at Ala-313–Gly-347. The interval Pro-350–Val-379 is PPI.

This sequence belongs to the protein kinase superfamily. CAMK Ser/Thr protein kinase family. SNF1 subfamily. Mn(2+) is required as a cofactor.

It carries out the reaction L-seryl-[protein] + ATP = O-phospho-L-seryl-[protein] + ADP + H(+). The catalysed reaction is L-threonyl-[protein] + ATP = O-phospho-L-threonyl-[protein] + ADP + H(+). CIPK serine-threonine protein kinases interact with CBL proteins. Binding of a CBL protein to the regulatory NAF domain of CIPK protein lead to the activation of the kinase in a calcium-dependent manner. The polypeptide is CBL-interacting protein kinase 29 (CIPK29) (Oryza sativa subsp. japonica (Rice)).